The chain runs to 915 residues: Translation initiation factor IF-2 (915 aa).

Residues 83–94 (QSRRAVEKEQIL) show a composition bias toward basic and acidic residues. Disordered regions lie at residues 83 to 177 (QSRR…PEPP), 216 to 280 (EADR…KPAV), and 293 to 328 (ISGMDDSSGTGSRSKFRKQRKMEREREQEEADLLRE). 2 stretches are compositionally biased toward low complexity: residues 111–129 (VRAAAQPAPVPVAAGEAPS) and 137–164 (APATESAPAVAPAGVPAAEPVSEALSAP). A compositionally biased stretch (pro residues) spans 165-177 (LPEPVPEPVPEPP). Over residues 293 to 305 (ISGMDDSSGTGSR) the composition is skewed to polar residues. A compositionally biased stretch (basic and acidic residues) spans 314–328 (MEREREQEEADLLRE). In terms of domain architecture, tr-type G spans 412 to 582 (TRPPVVTIMG…LTEAEMRELK (171 aa)). The tract at residues 421–428 (GHVDHGKT) is G1. Position 421–428 (421–428 (GHVDHGKT)) interacts with GTP. The segment at 446–450 (GITQH) is G2. Residues 468–471 (DTPG) form a G3 region. GTP-binding positions include 468-472 (DTPGH) and 522-525 (NKMD). The G4 stretch occupies residues 522–525 (NKMD). A G5 region spans residues 558 to 560 (SAK).

Belongs to the TRAFAC class translation factor GTPase superfamily. Classic translation factor GTPase family. IF-2 subfamily.

It is found in the cytoplasm. One of the essential components for the initiation of protein synthesis. Protects formylmethionyl-tRNA from spontaneous hydrolysis and promotes its binding to the 30S ribosomal subunits. Also involved in the hydrolysis of GTP during the formation of the 70S ribosomal complex. This chain is Translation initiation factor IF-2, found in Chlorobium luteolum (strain DSM 273 / BCRC 81028 / 2530) (Pelodictyon luteolum).